We begin with the raw amino-acid sequence, 92 residues long: YcgL domain-containing protein PBPRA1080 (92 aa).

Residues 1 to 84 (MLCSIYKSSK…PVTNLLHQYK (84 aa)) form the YcgL domain.

This is YcgL domain-containing protein PBPRA1080 from Photobacterium profundum (strain SS9).